Reading from the N-terminus, the 103-residue chain is N(4)-acetylcytidine amidohydrolase (103 aa).

The ASCH domain maps to 6–101; the sequence is ITFFQRFQDD…QTQFYVIEFK (96 aa). K21 acts as the Proton acceptor in catalysis. Catalysis depends on T24, which acts as the Nucleophile. The Proton donor role is filled by E74.

Belongs to the N(4)-acetylcytidine amidohydrolase family.

It catalyses the reaction N(4)-acetylcytidine + H2O = cytidine + acetate + H(+). It carries out the reaction N(4)-acetyl-2'-deoxycytidine + H2O = 2'-deoxycytidine + acetate + H(+). The enzyme catalyses N(4)-acetylcytosine + H2O = cytosine + acetate + H(+). Its function is as follows. Catalyzes the hydrolysis of N(4)-acetylcytidine (ac4C). The chain is N(4)-acetylcytidine amidohydrolase (yqfB) from Escherichia coli O81 (strain ED1a).